The following is an 89-amino-acid chain: Small ribosomal subunit protein bS20 (89 aa).

It belongs to the bacterial ribosomal protein bS20 family.

Functionally, binds directly to 16S ribosomal RNA. In Wolbachia sp. subsp. Brugia malayi (strain TRS), this protein is Small ribosomal subunit protein bS20.